A 732-amino-acid chain; its full sequence is TIR domain-containing adapter molecule 1 (732 aa).

A TRIF-NTD region spans residues 1 to 153 (MDNPGPSLRG…CSSDIKGDPS (153 aa)). The short motif at 84 to 91 (EGPEEPPD) is the TRAF6-binding element. Positions 144-191 (CSSDIKGDPSGFQPLHSHQGSLQPPSASPAVTRSQPRPIDTPDWSWGH) are disordered. Over residues 159–178 (HSHQGSLQPPSASPAVTRSQ) the composition is skewed to polar residues. Residues 206–209 (LEIS) carry the pLxIS motif motif. Position 209 is a phosphoserine (serine 209). Residue lysine 228 forms a Glycyl lysine isopeptide (Lys-Gly) (interchain with G-Cter in ubiquitin) linkage. 2 consecutive short sequence motifs (TRAF6-binding) follow at residues 247-254 (QEPEEISW) and 296-306 (HCPIECTELST). Residues 305–331 (STNSRSPLTSTTESVGKQWPITSQRSP) show a composition bias toward polar residues. Positions 305-389 (STNSRSPLTS…TSTSPVLDHS (85 aa)) are disordered. Residues 345–359 (SSSPPAQPPSLQASP) show a composition bias toward low complexity. The 140-residue stretch at 395-534 (KFYNFVVIHA…KVANTFKTQK (140 aa)) folds into the TIR domain. Positions 514–713 (WLDEHSPIFA…SSDDKTECSE (200 aa)) are sufficient to induce apoptosis. Disordered regions lie at residues 603 to 679 (TPSW…GPQP) and 696 to 732 (MWGH…ETPE). 2 stretches are compositionally biased toward pro residues: residues 604–615 (PSWPGCPQPIPS) and 625–657 (PYSP…PPVS). The span at 658 to 671 (SPQSQSFPSASSPA) shows a compositional bias: low complexity.

In terms of assembly, homodimer. Found in a multi-helicase-TICAM1 complex at least composed of DHX36, DDX1, DDX21 and TICAM1; this complex exists in resting cells with or without poly(I:C) RNA ligand stimulation. Interacts (via TIR domain) with DDX21 (via C-terminus). Interacts (via TIR domain) with DHX36 (via C-terminus). Interacts with AZI2 and IRF7. Interacts (when phosphorylated) with IRF3; following activation and phosphorylation on the pLxIS motif by TBK1, recruits IRF3. Interacts with TICAM2 in TLR4 recruitment. Interaction with PIAS4 inhibits the TICAM1-induced NF-kappa-B, IRF and IFNB1 activation. Interacts with IKBKB and IKBKE. Interaction with SARM1 blocks TICAM1-dependent transcription factor activation. Interacts with TRAF3. Interacts with TRAFD1. Interacts with UBQLN1 (via UBA domain). Interacts with TBK1, TRAF6 and RIPK1 and these interactions are enhanced in the presence of WDFY1. Interacts (via the TIR domain) with TLR3 in response to poly(I:C) and this interaction is enhanced in the presence of WDFY1. Interacts with TLR4 in response to poly(I:C) in a WDFY1-dependent manner. Interacts with WDFY1 in response to poly(I:C). Interacts with TRIM56. Interacts (via the TIR domain) with TLR5. Interacts with TRIM8. Interacts with TAX1BP1 and TRIM32; these interactions target TICAM1 to TAX1BP1-mediated selective autophagic degradation. Interacts with DDX50. In terms of processing, phosphorylated by TBK1. Following activation, phosphorylated by TBK1 at Ser-209 in the pLxIS motif. The phosphorylated pLxIS motif constitutes an IRF3-binding motif, leading to recruitment of the transcription factor IRF3 to induce type-I interferons and other cytokines. Polyubiquitinated at Lys-228 by TRIM38 with 'Lys-48'-linked chains, leading to proteasomal degradation. Polyubiquitinated with 'Lys-6'- and 'Lys-33'-linked chains in a TRIM8-dependent manner; ubiquitination disrupts the interaction with TBK1 and subsequent interferon production.

It is found in the cytoplasm. Its subcellular location is the cytosol. The protein resides in the cytoplasmic vesicle. It localises to the autophagosome. The protein localises to the mitochondrion. Involved in innate immunity against invading pathogens. Adapter used by TLR3, TLR4 (through TICAM2) and TLR5 to mediate NF-kappa-B and interferon-regulatory factor (IRF) activation, and to induce apoptosis. Ligand binding to these receptors results in TRIF recruitment through its TIR domain. Distinct protein-interaction motifs allow recruitment of the effector proteins TBK1, TRAF6 and RIPK1, which in turn, lead to the activation of transcription factors IRF3 and IRF7, NF-kappa-B and FADD respectively. Phosphorylation by TBK1 on the pLxIS motif leads to recruitment and subsequent activation of the transcription factor IRF3 to induce expression of type I interferon and exert a potent immunity against invading pathogens. Component of a multi-helicase-TICAM1 complex that acts as a cytoplasmic sensor of viral double-stranded RNA (dsRNA) and plays a role in the activation of a cascade of antiviral responses including the induction of pro-inflammatory cytokines. In Mus musculus (Mouse), this protein is TIR domain-containing adapter molecule 1 (Ticam1).